Here is a 280-residue protein sequence, read N- to C-terminus: uncharacterized protein (280 aa).

In terms of domain architecture, HTH rpiR-type spans 1-78 (MDVIQRIKEK…VLLAQSISRA (78 aa)). Residues 37 to 57 (ISDLSEKAGVKSEASVVKFYK) constitute a DNA-binding region (H-T-H motif). An SIS domain is found at 123-263 (TVDLFKNAQR…YTLLAARDPR (141 aa)).

This is an uncharacterized protein from Thermotoga maritima (strain ATCC 43589 / DSM 3109 / JCM 10099 / NBRC 100826 / MSB8).